A 382-amino-acid polypeptide reads, in one-letter code: Probable inactive dehydrogenase easA (382 aa).

Residues 25–27 (PMT), Ala60, Gln102, and His171 contribute to the FMN site. Substrate-binding residues include His171 and Asn174. FMN-binding positions include Lys223, Gly299, 324–325 (GR), and Arg325. Tyr352 lines the substrate pocket.

It belongs to the NADH:flavin oxidoreductase/NADH oxidase family.

Probable inactive dehydrogenase; part of the gene cluster that mediates the biosynthesis of fungal ergot alkaloid. DmaW catalyzes the first step of ergot alkaloid biosynthesis by condensing dimethylallyl diphosphate (DMAP) and tryptophan to form 4-dimethylallyl-L-tryptophan. The second step is catalyzed by the methyltransferase easF that methylates 4-dimethylallyl-L-tryptophan in the presence of S-adenosyl-L-methionine, resulting in the formation of 4-dimethylallyl-L-abrine. The catalase easC and the FAD-dependent oxidoreductase easE then transform 4-dimethylallyl-L-abrine to chanoclavine-I which is further oxidized by easD in the presence of NAD(+), resulting in the formation of chanoclavine-I aldehyde. Agroclavine dehydrogenase easG then mediates the conversion of chanoclavine-I aldehyde to agroclavine via a non-enzymatic adduct reaction: the substrate is an iminium intermediate that is formed spontaneously from chanoclavine-I aldehyde in the presence of glutathione. Further conversion of agroclavine to paspalic acid is a two-step process involving oxidation of agroclavine to elymoclavine and of elymoclavine to paspalic acid, the second step being performed by the elymoclavine oxidase cloA. However, cloA does not encode a functional enzyme indicating that C.fusiformis terminates its ergot alkaloid pathway at elymoclavine. This chain is Probable inactive dehydrogenase easA, found in Claviceps fusiformis (Ergot fungus).